A 420-amino-acid polypeptide reads, in one-letter code: MIKATDRKLVVGLEIGTAKVAALVGEVLPDGMVNIIGVGSCPSRGMDKGGVNDLESVVKCVQRAIDQAELMADCQISSVYLALSGKHISCQNEIGMVPISEEEVTQEDVENVVHTAKSVRVRDEHRVLHVIPQEYAIDYQEGIKNPVGLSGVRMQAKVHLITCHNDMAKNIVKAVERCGLKVDQLIFAGLASSYSVLTEDERELGVCVVDIGGGTMDIAVYTGGALRHTKVIPYAGNVVTSDIAYAFGTPPSDAEAIKVRHGCALGSIVGKDESVEVPSVGGRPPRSLQRQTLAEVIEPRYTELLNLVNEEILQLQEKLRQQGVKHHLAAGIVLTGGAAQIEGLAACAQRVFHTQVRIGAPLNITGLTDYAQEPYYSTAVGLLHYGKESHLNGEAEVEKRVTASVGSWIKRLNSWLRKEF.

The protein belongs to the FtsA/MreB family. As to quaternary structure, self-interacts. Interacts with FtsZ.

The protein localises to the cell inner membrane. Its function is as follows. Cell division protein that is involved in the assembly of the Z ring. May serve as a membrane anchor for the Z ring. This is Cell division protein FtsA from Escherichia coli O157:H7.